Consider the following 150-residue polypeptide: 3-dehydroquinate dehydratase (150 aa).

Residue Y26 is the Proton acceptor of the active site. N77, H83, and D90 together coordinate substrate. The active-site Proton donor is the H103. Substrate-binding positions include L104–S105 and R114.

This sequence belongs to the type-II 3-dehydroquinase family. Homododecamer.

It carries out the reaction 3-dehydroquinate = 3-dehydroshikimate + H2O. Its pathway is metabolic intermediate biosynthesis; chorismate biosynthesis; chorismate from D-erythrose 4-phosphate and phosphoenolpyruvate: step 3/7. In terms of biological role, catalyzes a trans-dehydration via an enolate intermediate. This is 3-dehydroquinate dehydratase from Photobacterium profundum (strain SS9).